We begin with the raw amino-acid sequence, 354 residues long: Protein RecA (354 aa).

67-74 (GPESSGKT) is an ATP binding site.

The protein belongs to the RecA family.

Its subcellular location is the cytoplasm. In terms of biological role, can catalyze the hydrolysis of ATP in the presence of single-stranded DNA, the ATP-dependent uptake of single-stranded DNA by duplex DNA, and the ATP-dependent hybridization of homologous single-stranded DNAs. It interacts with LexA causing its activation and leading to its autocatalytic cleavage. This Haemophilus influenzae (strain 86-028NP) protein is Protein RecA.